The primary structure comprises 98 residues: Protein FAM24A (98 aa).

Positions 1–29 (MFDLRTKVMIGIASTLLIAAIMLITLVFC) are cleaved as a signal peptide.

It belongs to the FAM24 family.

It is found in the secreted. This is Protein FAM24A (Fam24a) from Mus musculus (Mouse).